A 216-amino-acid chain; its full sequence is MAANVKVLVVLALLQLMSLHAVVHGGDNGGVSAVATGKHEPKPKQGGGGGGGDGGCHISGFLHGKAGKCNRAHGSDCCVTGRRYPQFRCSPPVSSARPTPATLTLNSFARGGDGGGRSSCDGRFHPDTAMVVALSSGWLRLDGASRCNRMIRVAAGNGRSALARVVDECDSVNGCDAEHNFEPPCPNDVVDGSPAVWKALGLDEGVGEFKVTWSDV.

A signal peptide spans 1-25 (MAANVKVLVVLALLQLMSLHAVVHG).

Belongs to the kiwellin family.

It is found in the secreted. This Oryza sativa subsp. japonica (Rice) protein is Putative ripening-related protein 4.